The chain runs to 262 residues: Elongator complex protein 5 (262 aa).

Disordered stretches follow at residues T181 to E214 and P229 to I262. Positions A200–F211 are enriched in polar residues. The segment covering D246–I262 has biased composition (acidic residues).

This sequence belongs to the ELP5 family. As to quaternary structure, component of the elongator complex composed of Elp1, Elp2, Elp3, Elp4, Elp5 and Elp6. The elongator complex associates with and stabilizes microtubules; efficient interaction requires the full complex.

Its subcellular location is the cytoplasm. It localises to the nucleus. The protein localises to the cytoskeleton. It is found in the spindle. It functions in the pathway tRNA modification; 5-methoxycarbonylmethyl-2-thiouridine-tRNA biosynthesis. In terms of biological role, component of the elongator complex, which is required for multiple tRNA modifications, including mcm5U (5-methoxycarbonylmethyl uridine), mcm5s2U (5-methoxycarbonylmethyl-2-thiouridine), and ncm5U (5-carbamoylmethyl uridine). The elongator complex catalyzes the formation of carboxymethyluridine in the wobble base at position 34 in tRNAs. Binding by the elongator complex stabilizes microtubules and promotes their growth. This induces central spindle asymmetry, promoting polarized signaling endosome trafficking during asymmetric cell division and cell fate assignation of sensory organ precursor cells. The protein is Elongator complex protein 5 of Drosophila melanogaster (Fruit fly).